Here is a 689-residue protein sequence, read N- to C-terminus: Glycine--tRNA ligase beta subunit (689 aa).

Belongs to the class-II aminoacyl-tRNA synthetase family. As to quaternary structure, tetramer of two alpha and two beta subunits.

The protein resides in the cytoplasm. It catalyses the reaction tRNA(Gly) + glycine + ATP = glycyl-tRNA(Gly) + AMP + diphosphate. The sequence is that of Glycine--tRNA ligase beta subunit from Pectobacterium carotovorum subsp. carotovorum (strain PC1).